The following is a 374-amino-acid chain: F(420)H(2) dehydrogenase subunit D (374 aa).

It belongs to the complex I 49 kDa subunit family. The FPO complex is composed of at least 13 different subunits.

Its subcellular location is the cell inner membrane. It catalyses the reaction methanophenazine + reduced coenzyme F420-(gamma-L-Glu)(n) = dihydromethanophenazine + oxidized coenzyme F420-(gamma-L-Glu)(n) + H(+). In terms of biological role, component of the F(420)H(2) dehydrogenase (FPO complex) which is part of the energy-conserving F(420)H(2):heterodisulfide oxidoreductase system. The membrane-bound electron transfer system of the complex plays an important role in the metabolism of methylotrophic methanogens when the organisms grow on methanol or methylamines. Catalyzes the oxidation of methanophenazine to dihydromethanophenazine. It shuttles electrons from F(420)H(2), via FAD and iron-sulfur (Fe-S) centers, to methanophenazine (an electron carrier in the membrane). It couples the redox reaction to proton translocation (for every two electrons transferred, two hydrogen ions are translocated across the cytoplasmic membrane), and thus conserves the redox energy in a proton gradient. It also catalyzes the oxidation of F(420)H(2) with quinones such as 2,3-dimethyl-1,4-naphthoquinone, 2-methyl-1,4-naphthoquinone and tetramethyl-p-benzoquinone. In Methanosarcina mazei (strain ATCC BAA-159 / DSM 3647 / Goe1 / Go1 / JCM 11833 / OCM 88) (Methanosarcina frisia), this protein is F(420)H(2) dehydrogenase subunit D (fpoD).